A 316-amino-acid polypeptide reads, in one-letter code: HPr kinase/phosphorylase (316 aa).

Catalysis depends on residues His146 and Lys167. ATP is bound at residue 161 to 168 (GESGLGKS). Ser168 contacts Mg(2+). Asp185 functions as the Proton acceptor; for phosphorylation activity. Proton donor; for dephosphorylation activity in the catalytic mechanism. Residues 209–218 (LEVRGIGLLD) are important for the catalytic mechanism of both phosphorylation and dephosphorylation. Glu210 contacts Mg(2+). Arg252 is an active-site residue. The important for the catalytic mechanism of dephosphorylation stretch occupies residues 273 to 278 (QVEAGR).

This sequence belongs to the HPrK/P family. In terms of assembly, homohexamer. The cofactor is Mg(2+).

It carries out the reaction [HPr protein]-L-serine + ATP = [HPr protein]-O-phospho-L-serine + ADP + H(+). The enzyme catalyses [HPr protein]-O-phospho-L-serine + phosphate + H(+) = [HPr protein]-L-serine + diphosphate. Catalyzes the ATP- as well as the pyrophosphate-dependent phosphorylation of a specific serine residue in HPr, a phosphocarrier protein of the phosphoenolpyruvate-dependent sugar phosphotransferase system (PTS). HprK/P also catalyzes the pyrophosphate-producing, inorganic phosphate-dependent dephosphorylation (phosphorolysis) of seryl-phosphorylated HPr (P-Ser-HPr). The protein is HPr kinase/phosphorylase of Polaromonas naphthalenivorans (strain CJ2).